A 69-amino-acid chain; its full sequence is Beta-defensin 1 (69 aa).

The signal sequence occupies residues 1-21 (MKTHYFLLVMICFLFSQMEPG). Positions 22–32 (VGILTSLGRRT) are excised as a propeptide. Cystine bridges form between C37–C66, C44–C59, and C49–C67.

It belongs to the beta-defensin family. Monomer. Homodimer. In terms of tissue distribution, detected in kidney.

It is found in the secreted. It localises to the membrane. Functionally, has bactericidal activity. May act as a ligand for C-C chemokine receptor CCR6. Positively regulates the sperm motility and bactericidal activity in a CCR6-dependent manner. Binds to CCR6 and triggers Ca2+ mobilization in the sperm which is important for its motility. This chain is Beta-defensin 1 (Defb1), found in Mus musculus (Mouse).